The chain runs to 560 residues: NAD-dependent malic enzyme (560 aa).

Residue Tyr100 is the Proton donor of the active site. Arg153 contributes to the NAD(+) binding site. Lys171 acts as the Proton acceptor in catalysis. A divalent metal cation is bound by residues Glu242, Asp243, and Asp266. Asp266 and Asn413 together coordinate NAD(+).

Belongs to the malic enzymes family. In terms of assembly, homotetramer. The cofactor is Mg(2+). It depends on Mn(2+) as a cofactor.

The catalysed reaction is (S)-malate + NAD(+) = pyruvate + CO2 + NADH. The enzyme catalyses oxaloacetate + H(+) = pyruvate + CO2. The chain is NAD-dependent malic enzyme from Psychromonas ingrahamii (strain DSM 17664 / CCUG 51855 / 37).